Here is a 170-residue protein sequence, read N- to C-terminus: uncharacterized protein (170 aa).

3 consecutive transmembrane segments (helical) span residues 6-26 (PFYF…ILLI), 31-51 (LLFI…LIYI), and 91-111 (IYFS…IVAF).

This sequence to M.jannaschii MJ1249.1, MJ0210.1 and MJ0785.1.

It localises to the cell membrane. This is an uncharacterized protein from Methanocaldococcus jannaschii (strain ATCC 43067 / DSM 2661 / JAL-1 / JCM 10045 / NBRC 100440) (Methanococcus jannaschii).